The primary structure comprises 200 residues: Pyridoxal 5'-phosphate synthase subunit PdxT (200 aa).

52 to 54 (GES) is a binding site for L-glutamine. The active-site Nucleophile is C84. L-glutamine is bound by residues R116 and 145-146 (IR). Catalysis depends on charge relay system residues H181 and E183.

The protein belongs to the glutaminase PdxT/SNO family. In the presence of PdxS, forms a dodecamer of heterodimers. Only shows activity in the heterodimer.

It carries out the reaction aldehydo-D-ribose 5-phosphate + D-glyceraldehyde 3-phosphate + L-glutamine = pyridoxal 5'-phosphate + L-glutamate + phosphate + 3 H2O + H(+). It catalyses the reaction L-glutamine + H2O = L-glutamate + NH4(+). Its pathway is cofactor biosynthesis; pyridoxal 5'-phosphate biosynthesis. Catalyzes the hydrolysis of glutamine to glutamate and ammonia as part of the biosynthesis of pyridoxal 5'-phosphate. The resulting ammonia molecule is channeled to the active site of PdxS. The polypeptide is Pyridoxal 5'-phosphate synthase subunit PdxT (Saccharolobus islandicus (strain M.16.27) (Sulfolobus islandicus)).